The chain runs to 141 residues: Small ribosomal subunit protein eS17z (141 aa).

This sequence belongs to the eukaryotic ribosomal protein eS17 family.

This is Small ribosomal subunit protein eS17z (RPS17A) from Arabidopsis thaliana (Mouse-ear cress).